The sequence spans 76 residues: Small ribosomal subunit protein bS18 (76 aa).

This sequence belongs to the bacterial ribosomal protein bS18 family. In terms of assembly, part of the 30S ribosomal subunit. Forms a tight heterodimer with protein bS6.

In terms of biological role, binds as a heterodimer with protein bS6 to the central domain of the 16S rRNA, where it helps stabilize the platform of the 30S subunit. The sequence is that of Small ribosomal subunit protein bS18 from Marinobacter nauticus (strain ATCC 700491 / DSM 11845 / VT8) (Marinobacter aquaeolei).